The sequence spans 149 residues: UPF0260 protein Psyr_1567 (149 aa).

The protein belongs to the UPF0260 family.

The polypeptide is UPF0260 protein Psyr_1567 (Pseudomonas syringae pv. syringae (strain B728a)).